We begin with the raw amino-acid sequence, 473 residues long: MKTLYSLRRSYPVETLFNGTLALGGRDQATTGFAWWSGNARLINLSGKLLGAHVAHAGLIVFWAGAMNLFEVAHFVPEKPMYEQGLILLPHLATLGWGVGPGGEVVDTFPYFVSGVLHLISSAVLGFGGVYHALIGPETLEESFPFFGYVWKDKNKMTTILGIHLILLGAGAFLLVFKALYFGGLYDTWAPGGGDVRKITNITLNPGVIFGYLLKSPFGGEGWIVSVDNLEDIVGGHVWLGSICILGGIWHILTKPFAWARRAFVWSGEAYLSYSLAAISVMGFIACCFVWFNNTAYPSEFYGPTGPEASQAQAFTFLVRDQRLGANVGSAQGPTGLGKYLMRSPTGEIIFGGETMRFWDLRAPWLEPLRGPNGLDLGKLKKDIQPWQERRSAEYMTHAPLGSLNSVGGVATEINAVNYVSPRSWLSTSHFVLGFFFFVGHLWHAGRARAAAAGFEKGIDRDTEPVLFMNPLN.

The propeptide occupies M1–E14. T15 is subject to N-acetylthreonine. T15 carries the post-translational modification Phosphothreonine. 5 helical membrane passes run L69–A93, L134–N155, K178–T200, K255–S275, and W291–A312. [CaMn4O5] cluster is bound at residue E367. The chain crosses the membrane as a helical span at residues R447–P471.

Belongs to the PsbB/PsbC family. PsbC subfamily. As to quaternary structure, PSII is composed of 1 copy each of membrane proteins PsbA, PsbB, PsbC, PsbD, PsbE, PsbF, PsbH, PsbI, PsbJ, PsbK, PsbL, PsbM, PsbT, PsbX, PsbY, PsbZ, Psb30/Ycf12, at least 3 peripheral proteins of the oxygen-evolving complex and a large number of cofactors. It forms dimeric complexes. Binds multiple chlorophylls and provides some of the ligands for the Ca-4Mn-5O cluster of the oxygen-evolving complex. It may also provide a ligand for a Cl- that is required for oxygen evolution. PSII binds additional chlorophylls, carotenoids and specific lipids. serves as cofactor.

The protein localises to the plastid. It is found in the chloroplast thylakoid membrane. Its function is as follows. One of the components of the core complex of photosystem II (PSII). It binds chlorophyll and helps catalyze the primary light-induced photochemical processes of PSII. PSII is a light-driven water:plastoquinone oxidoreductase, using light energy to abstract electrons from H(2)O, generating O(2) and a proton gradient subsequently used for ATP formation. In Zygnema circumcarinatum (Green alga), this protein is Photosystem II CP43 reaction center protein.